A 217-amino-acid chain; its full sequence is Dephospho-CoA kinase (217 aa).

One can recognise a DPCK domain in the interval 4–203 (IVALTGGISS…SHLSRIYNKN (200 aa)). Residue 12–17 (SSGKTT) coordinates ATP.

This sequence belongs to the CoaE family.

The protein resides in the cytoplasm. It carries out the reaction 3'-dephospho-CoA + ATP = ADP + CoA + H(+). Its pathway is cofactor biosynthesis; coenzyme A biosynthesis; CoA from (R)-pantothenate: step 5/5. In terms of biological role, catalyzes the phosphorylation of the 3'-hydroxyl group of dephosphocoenzyme A to form coenzyme A. The polypeptide is Dephospho-CoA kinase (Buchnera aphidicola subsp. Acyrthosiphon pisum (strain APS) (Acyrthosiphon pisum symbiotic bacterium)).